Here is a 250-residue protein sequence, read N- to C-terminus: ATP synthase subunit a (250 aa).

The next 6 membrane-spanning stretches (helical) occupy residues 26 to 46, 84 to 104, 114 to 134, 143 to 163, 193 to 213, and 216 to 236; these read FTNA…FLYL, FFPM…LGMV, IIVT…YGFY, LFVP…IEII, FVAS…LPLI, and VALT…FAVL.

It belongs to the ATPase A chain family. In terms of assembly, F-type ATPases have 2 components, CF(1) - the catalytic core - and CF(0) - the membrane proton channel. CF(1) has five subunits: alpha(3), beta(3), gamma(1), delta(1), epsilon(1). CF(0) has three main subunits: a(1), b(2) and c(9-12). The alpha and beta chains form an alternating ring which encloses part of the gamma chain. CF(1) is attached to CF(0) by a central stalk formed by the gamma and epsilon chains, while a peripheral stalk is formed by the delta and b chains.

Its subcellular location is the cell inner membrane. In terms of biological role, key component of the proton channel; it plays a direct role in the translocation of protons across the membrane. This chain is ATP synthase subunit a, found in Rhizobium meliloti (strain 1021) (Ensifer meliloti).